Reading from the N-terminus, the 177-residue chain is Large ribosomal subunit protein uL6 (177 aa).

This sequence belongs to the universal ribosomal protein uL6 family. Part of the 50S ribosomal subunit.

This protein binds to the 23S rRNA, and is important in its secondary structure. It is located near the subunit interface in the base of the L7/L12 stalk, and near the tRNA binding site of the peptidyltransferase center. This chain is Large ribosomal subunit protein uL6, found in Ralstonia pickettii (strain 12J).